The following is a 581-amino-acid chain: Proline--tRNA ligase (581 aa).

This sequence belongs to the class-II aminoacyl-tRNA synthetase family. ProS type 1 subfamily. In terms of assembly, homodimer.

The protein resides in the cytoplasm. It carries out the reaction tRNA(Pro) + L-proline + ATP = L-prolyl-tRNA(Pro) + AMP + diphosphate. Its function is as follows. Catalyzes the attachment of proline to tRNA(Pro) in a two-step reaction: proline is first activated by ATP to form Pro-AMP and then transferred to the acceptor end of tRNA(Pro). As ProRS can inadvertently accommodate and process non-cognate amino acids such as alanine and cysteine, to avoid such errors it has two additional distinct editing activities against alanine. One activity is designated as 'pretransfer' editing and involves the tRNA(Pro)-independent hydrolysis of activated Ala-AMP. The other activity is designated 'posttransfer' editing and involves deacylation of mischarged Ala-tRNA(Pro). The misacylated Cys-tRNA(Pro) is not edited by ProRS. The polypeptide is Proline--tRNA ligase (Azoarcus sp. (strain BH72)).